Reading from the N-terminus, the 268-residue chain is uncharacterized protein (268 aa).

The protein belongs to the LarE family.

This is an uncharacterized protein from Synechocystis sp. (strain ATCC 27184 / PCC 6803 / Kazusa).